We begin with the raw amino-acid sequence, 479 residues long: MDFFGPHLLAYFIATLHFLGTLAAIHAVLTVRTAQGSIAWALSLMFMPYLTLIPYLIFGRSTFDAYIQARRQANQEMHTAITALNWRPWVEEALAARNSSAYASLRAMPKLGRMPCLANNEVHLLINGDATFSAIFEAIRNARTAVLFQFFIIHDDELGRQLHALLKEKSAEGVAIYVLYDRIGSHALPHRYVQSLRDAGVQVKAFATRSGWLNRFQVNFRNHRKIVVVDGITGFVGGHNVGDEYLGKKPPLAPWRDTHVQVTGPVVACLQESFAEDWFWAARELPPLILPDAYPEDGVLCQLLASGPADPYETCSLFFVEAIHAATERVWITSPYFIPDEAVFAALRLAVLRGVDVRLLLPSRPDHRIVYAASSLYAIEAVRAGVRVFRYTPGFLHQKVVLVDSEISAIGSANMDNRSFRLNFEVMLLTVDEAFAKEVEHMLLDDFALAHEVSQEESRETRRLQQLGMRVARLISPIL.

Transmembrane regions (helical) follow at residues 8 to 28 (LLAY…IHAV) and 38 to 58 (IAWA…YLIF). PLD phosphodiesterase domains are found at residues 218 to 245 (VNFR…GDEY) and 392 to 419 (TPGF…DNRS). Residues H223, K225, D230, H397, K399, and D404 contribute to the active site.

This sequence belongs to the phospholipase D family. Cardiolipin synthase subfamily. ClsA sub-subfamily.

Its subcellular location is the cell inner membrane. It catalyses the reaction 2 a 1,2-diacyl-sn-glycero-3-phospho-(1'-sn-glycerol) = a cardiolipin + glycerol. In terms of biological role, catalyzes the reversible phosphatidyl group transfer from one phosphatidylglycerol molecule to another to form cardiolipin (CL) (diphosphatidylglycerol) and glycerol. The polypeptide is Cardiolipin synthase A (Pseudomonas fluorescens (strain SBW25)).